Consider the following 110-residue polypeptide: DNA-binding protein Pars_1791 (110 aa).

The protein belongs to the PDCD5 family.

The chain is DNA-binding protein Pars_1791 from Pyrobaculum arsenaticum (strain DSM 13514 / JCM 11321 / PZ6).